Here is a 1220-residue protein sequence, read N- to C-terminus: Protein transport protein Sec31A (1220 aa).

WD repeat units follow at residues 4–47 (KEVD…EIFE), 68–111 (RYHK…AGDK), 120–160 (KHTG…TPMT), 166–206 (QPPE…PIIK), 209–254 (DHSN…SPLR), 258–298 (NHAR…VLYE), and 301–342 (TNTQ…DGLR). An interaction with SEC13 region spans residues 161–471 (PGAKTQPPED…IDASQTEFEK (311 aa)). Residues 397–430 (SFSFGGKLVTFENVRMPSHQGAEQQQQQHHVFIS) form a WD 8; interaction with SEC13 repeat. Ser-527 and Ser-532 each carry phosphoserine. Lys-647 is covalently cross-linked (Glycyl lysine isopeptide (Lys-Gly) (interchain with G-Cter in ubiquitin)). Disordered stretches follow at residues 791–908 (GEPV…NAYP) and 924–1096 (QLYA…GNTF). Position 799 is a phosphoserine (Ser-799). The interaction with PDCD6 stretch occupies residues 800–1113 (PKIPYEKQQL…TKKITKKPIP (314 aa)). An ALG-2-binding site motif-2 (ABS-2) motif is present at residues 842–848 (GFIMHGN). Over residues 849–859 (VNPNAAGQLPT) the composition is skewed to polar residues. Pro residues predominate over residues 869–882 (PPYPQPQPYQPAQP). The span at 962 to 972 (PSSSAYALPPG) shows a compositional bias: low complexity. Polar residues-rich tracts occupy residues 984–995 (PASQRTGPQNGW) and 1031–1053 (PQSQ…SSFP). Thr-1161 carries the post-translational modification Phosphothreonine. Ser-1163 carries the phosphoserine modification. Lys-1217 participates in a covalent cross-link: Glycyl lysine isopeptide (Lys-Gly) (interchain with G-Cter in ubiquitin).

Belongs to the WD repeat SEC31 family. In terms of assembly, COPII is composed of at least 5 proteins: the SEC23/24 complex, the SEC13/31 complex and SAR1. SEC13 and SEC31 make a 2:2 tetramer that forms the edge element of the COPII outer coat. The tetramer self-assembles in multiple copies to form the complete polyhedral cage. Interacts (via WD 8) with SEC13. Interacts with PDCD6; interaction takes place in response to cytosolic calcium increase and leads to bridge together the BCR(KLHL12) complex and SEC31A, leading to monoubiquitination. Interacts with KLHL12. In terms of processing, monoubiquitinated by the BCR(KLHL12) E3 ubiquitin ligase complex, leading to regulate the size of COPII coats. As to expression, abundantly and ubiquitously expressed.

The protein resides in the cytoplasm. It localises to the cytoplasmic vesicle. Its subcellular location is the COPII-coated vesicle membrane. It is found in the endoplasmic reticulum membrane. The protein localises to the cytosol. In terms of biological role, component of the coat protein complex II (COPII) which promotes the formation of transport vesicles from the endoplasmic reticulum (ER). The coat has two main functions, the physical deformation of the endoplasmic reticulum membrane into vesicles and the selection of cargo molecules. The sequence is that of Protein transport protein Sec31A (SEC31A) from Homo sapiens (Human).